Reading from the N-terminus, the 547-residue chain is Sodium-coupled neutral amino acid transporter 4 (547 aa).

Residues Met1–Ile30 form a disordered region. Over Met1–Gly104 the chain is Extracellular. Ser49 is modified (phosphoserine). A helical membrane pass occupies residues Ile105–Leu125. Residues Leu126 to Lys151 are Cytoplasmic-facing. Residues Ile152–Ile172 traverse the membrane as a helical segment. Residues Ile173–Tyr195 lie on the Extracellular side of the membrane. Residues Leu196 to Leu216 form a helical membrane-spanning segment. Over Lys217–Gly220 the chain is Cytoplasmic. Residues Tyr221–Ile241 traverse the membrane as a helical segment. Residues Tyr242–Thr332 are Extracellular-facing. Cys249 and Cys321 are oxidised to a cystine. Residues Asn260, Asn264, and Asn276 are each glycosylated (N-linked (GlcNAc...) asparagine). A helical membrane pass occupies residues Ala333–Tyr353. The Cytoplasmic portion of the chain corresponds to Ser354–Asn369. The chain crosses the membrane as a helical span at residues Ile370–Phe390. At Tyr391–Pro411 the chain is on the extracellular side. Residues Leu412–Phe432 form a helical membrane-spanning segment. Topologically, residues Pro433–His453 are cytoplasmic. A helical transmembrane segment spans residues Phe454–Ile474. At Lys475–Tyr476 the chain is on the extracellular side. A helical membrane pass occupies residues Ile477–Phe497. Residues Tyr498 to Gly514 lie on the Cytoplasmic side of the membrane. A helical membrane pass occupies residues Ala515–Ile535. The Extracellular portion of the chain corresponds to Asp536–His547.

The protein belongs to the amino acid/polyamine transporter 2 family. Post-translationally, the disulfide bond plays an important role in substrate transport, but has no effect on trafficking to the cell surface. In terms of tissue distribution, expressed almost exclusively in embryonic and adult liver, and at lower levels in the kidney. Expressed at lower levels in adult muscle and pancreas. Detected in fetal blood vessels. Expressed in syncytiotrophoblas of placenta during first trimester and at term. Highly expressed in first trimester placenta compared to term placenta.

The protein localises to the cell membrane. Its subcellular location is the cell projection. It localises to the microvillus membrane. The enzyme catalyses L-methionine(in) + Na(+)(in) = L-methionine(out) + Na(+)(out). The catalysed reaction is L-asparagine(in) + Na(+)(in) = L-asparagine(out) + Na(+)(out). It catalyses the reaction L-threonine(in) + Na(+)(in) = L-threonine(out) + Na(+)(out). It carries out the reaction L-serine(in) + Na(+)(in) = L-serine(out) + Na(+)(out). The enzyme catalyses glycine(in) + Na(+)(in) = glycine(out) + Na(+)(out). The catalysed reaction is L-alanine(in) + Na(+)(in) = L-alanine(out) + Na(+)(out). It catalyses the reaction L-glutamine(in) + Na(+)(in) = L-glutamine(out) + Na(+)(out). It carries out the reaction L-histidine(in) + Na(+)(in) = L-histidine(out) + Na(+)(out). The enzyme catalyses L-cysteine(in) + Na(+)(in) = L-cysteine(out) + Na(+)(out). The catalysed reaction is L-proline(in) + Na(+)(in) = L-proline(out) + Na(+)(out). Symporter that cotransports neutral amino acids and sodium ions from the extraccellular to the intracellular side of the cell membrane. The transport is electrogenic, pH dependent and partially tolerates substitution of Na(+) by Li(+). Preferentially transports smaller amino acids, such as glycine, L-alanine, L-serine, L-asparagine and L-threonine, followed by L-cysteine, L-histidine, L-proline and L-glutamine and L-methionine. This is Sodium-coupled neutral amino acid transporter 4 from Homo sapiens (Human).